A 347-amino-acid chain; its full sequence is Protein PET130 (347 aa).

The protein localises to the mitochondrion matrix. In Saccharomyces cerevisiae (strain ATCC 204508 / S288c) (Baker's yeast), this protein is Protein PET130 (PET130).